We begin with the raw amino-acid sequence, 506 residues long: Photosystem II CP47 reaction center protein (506 aa).

6 consecutive transmembrane segments (helical) span residues 21–36, 101–115, 140–156, 203–218, 237–252, and 457–472; these read SVHIMHTALVAGWAGS, ILFSGLCFLAAIWHW, GIHLFLSGLGCFGFGAF, IAAGTLGILAGLFHLS, VLSSSIAAVFFAAFVV, and SFALLFFFGHIWHGAR.

Belongs to the PsbB/PsbC family. PsbB subfamily. In terms of assembly, PSII is composed of 1 copy each of membrane proteins PsbA, PsbB, PsbC, PsbD, PsbE, PsbF, PsbH, PsbI, PsbJ, PsbK, PsbL, PsbM, PsbT, PsbX, PsbY, PsbZ, Psb30/Ycf12, at least 3 peripheral proteins of the oxygen-evolving complex and a large number of cofactors. It forms dimeric complexes. Requires Binds multiple chlorophylls. PSII binds additional chlorophylls, carotenoids and specific lipids. as cofactor.

It localises to the plastid. It is found in the chloroplast thylakoid membrane. One of the components of the core complex of photosystem II (PSII). It binds chlorophyll and helps catalyze the primary light-induced photochemical processes of PSII. PSII is a light-driven water:plastoquinone oxidoreductase, using light energy to abstract electrons from H(2)O, generating O(2) and a proton gradient subsequently used for ATP formation. This Cucumis sativus (Cucumber) protein is Photosystem II CP47 reaction center protein.